A 96-amino-acid polypeptide reads, in one-letter code: Large ribosomal subunit protein bL27 (96 aa).

Positions 1-9 (MLRLDLQFF) are excised as a propeptide. The tract at residues 13–35 (KGVGSTKNGRDSQSKRLGAKRAD) is disordered.

Belongs to the bacterial ribosomal protein bL27 family. Post-translationally, the N-terminus is cleaved by ribosomal processing cysteine protease Prp.

The sequence is that of Large ribosomal subunit protein bL27 from Bacillus cereus (strain B4264).